Reading from the N-terminus, the 1423-residue chain is MKDLVKFLKAQSKSNDDFDVIKIGLASPDKIRSWSFGEVKKPETINYRTFKPERDGLFCARIFGPVKDYECLCGKYKRLKHRGVICEKCGVEVTQTKVRRDRMGHIELACPVAHIWFLKSLPSRIGLILDMPLRDIERVLYFESYVVTEPGMTDLEKNQLLTEEQFLDAEERWGDEFEAKMGAEGIQALLRDMDLEHQCEMMREELQETNSETKRKKITKRLKLLEAFQQSGNKPEWMVMTVLPVLPPDLRPLVPLDGGRFATSDLNDLYRRVINRNNRLKRLLDLVAPDIIVRNEKRMLQESVDALLDNGRRGRAITGSNKRPLKSLADMIKGKQGRFRQNLLGKRVDYSGRSVITVGPYLHLHQCGLPKKMALELFRPFIYSKLESRGIASTIKAAKKMVEREEPIVWDILAEVIREHPILLNRAPTLHRLGIQAFEPILIEGKAIQLHPLVCAAFNADFDGDQMAVHVPLTLEAQLEARALMMSTNNVLSPASGDPIIVPSQDVVLGLYYMTREKVNAKGEGMYFLDPREAEKAYRTGQAELHARVKVRITEHVKNEAGELVAETKLLDTTIGRAILWMIAPKGMPFKVFNQTLGKKAISKLINESYRRLGLKESVILADQIMYTGFAYAARSGASVGIDDMVIPAQKHEIIRAAEAEVAEIQEQFNSGLVTAGERYNKVIDIWAAANERVAKAMMENLSTEEVINREGNPEKQASFNSIFMMADSGARGSAAQIRQLAGMRGLMARPDGSIIETPITANFREGLNVLQYFISTHGARKGLADTALKTANSGYLTRRLVDVAQDLVITEDDCGTHEGIVMTPLIEGGDVKEALRDRVLGRVVAEDVLKPGTEEVLIPRNTLIDEKWCDVIDAESVDVIKVRSVVTCNTDFGVCAKCYGRDLARGHLINQGEAVGVIAAQSIGEPGTQLTMRTFHIGGAASAAAKESSIQVKNAGTIKLTNAKFVTNKEGKIVLTSRNTELTVIDTFGRTKENYKVPYGAVLSKNDGAEVAVGEVVANWDPHTMPVISEVSGRIQFSDIVDGLTVTRQTDELTGLSSIVVQDVGERATAGKDLRPALRLVDAQGNDILIPSTDVAAQYFLPGKAIVTLDDGAEIEVGEALARIPQESVGTKDITGGLPRVADLFEARKPKEPAILAEISGIVSFGKETKGKRRLVITPAEGEAFEEMIPKWRQLNVFEGEMVQRGDVISDGAETPHDILRLRGVHAVTDYIVNEVQEVYRLQGVKINDKHIEVIVRQMLRKAVITNAYDSEFLEGEQVEVSRVKIANRKRAEEGKPLVEFERELLGITKASLATESFISAASFQETTRVLTEAAVAGKRDELRGLKENVIVGRLIPAGTGFAYHQNRAKKRNQPEQAGAFEAPVAKANGFATDADIEAEFEFVADDATQSLAALLNAGDEE.

Zn(2+)-binding residues include Cys-71, Cys-73, Cys-86, and Cys-89. Mg(2+)-binding residues include Asp-461, Asp-463, and Asp-465. Cys-815, Cys-889, Cys-896, and Cys-899 together coordinate Zn(2+).

Belongs to the RNA polymerase beta' chain family. As to quaternary structure, the RNAP catalytic core consists of 2 alpha, 1 beta, 1 beta' and 1 omega subunit. When a sigma factor is associated with the core the holoenzyme is formed, which can initiate transcription. The cofactor is Mg(2+). Zn(2+) serves as cofactor.

It carries out the reaction RNA(n) + a ribonucleoside 5'-triphosphate = RNA(n+1) + diphosphate. Functionally, DNA-dependent RNA polymerase catalyzes the transcription of DNA into RNA using the four ribonucleoside triphosphates as substrates. The polypeptide is DNA-directed RNA polymerase subunit beta' (Actinobacillus pleuropneumoniae serotype 7 (strain AP76)).